The following is a 422-amino-acid chain: Enolase (422 aa).

Q162 is a (2R)-2-phosphoglycerate binding site. Residue E204 is the Proton donor of the active site. D241, E284, and D311 together coordinate Mg(2+). Positions 336, 365, 366, and 387 each coordinate (2R)-2-phosphoglycerate. The active-site Proton acceptor is K336.

It belongs to the enolase family. It depends on Mg(2+) as a cofactor.

It localises to the cytoplasm. Its subcellular location is the secreted. It is found in the cell surface. The catalysed reaction is (2R)-2-phosphoglycerate = phosphoenolpyruvate + H2O. Its pathway is carbohydrate degradation; glycolysis; pyruvate from D-glyceraldehyde 3-phosphate: step 4/5. Its function is as follows. Catalyzes the reversible conversion of 2-phosphoglycerate (2-PG) into phosphoenolpyruvate (PEP). It is essential for the degradation of carbohydrates via glycolysis. The protein is Enolase of Thermus thermophilus (strain ATCC 27634 / DSM 579 / HB8).